A 265-amino-acid polypeptide reads, in one-letter code: 4-diphosphocytidyl-2-C-methyl-D-erythritol kinase (265 aa).

Lys8 is a catalytic residue. 95–105 (PIGAGLGGGSS) lines the ATP pocket. Residue Asp135 is part of the active site.

Belongs to the GHMP kinase family. IspE subfamily.

The enzyme catalyses 4-CDP-2-C-methyl-D-erythritol + ATP = 4-CDP-2-C-methyl-D-erythritol 2-phosphate + ADP + H(+). Its pathway is isoprenoid biosynthesis; isopentenyl diphosphate biosynthesis via DXP pathway; isopentenyl diphosphate from 1-deoxy-D-xylulose 5-phosphate: step 3/6. Its function is as follows. Catalyzes the phosphorylation of the position 2 hydroxy group of 4-diphosphocytidyl-2C-methyl-D-erythritol. This is 4-diphosphocytidyl-2-C-methyl-D-erythritol kinase from Ureaplasma urealyticum serovar 10 (strain ATCC 33699 / Western).